A 114-amino-acid chain; its full sequence is U17-barytoxin-Tl1d (114 aa).

The first 20 residues, 1–20 (MKTIIVFLSLLVLATKFGDA), serve as a signal peptide directing secretion. A propeptide spanning residues 21 to 74 (NEGVNQEQMKEVIQNEFREDFLNEMAPMSLLQQLEAIESTLLEKEADRNSRQKR) is cleaved from the precursor. 3 cysteine pairs are disulfide-bonded: Cys75-Cys88, Cys82-Cys93, and Cys87-Cys108.

It belongs to the neurotoxin 14 (magi-1) family. 03 (ICK-30-40) subfamily. As to expression, expressed by the venom gland.

The protein localises to the secreted. In terms of biological role, ion channel inhibitor. The polypeptide is U17-barytoxin-Tl1d (Trittame loki (Brush-footed trapdoor spider)).